A 304-amino-acid polypeptide reads, in one-letter code: tRNA pseudouridine synthase B (304 aa).

Asp-41 functions as the Nucleophile in the catalytic mechanism.

The protein belongs to the pseudouridine synthase TruB family. Type 1 subfamily.

It catalyses the reaction uridine(55) in tRNA = pseudouridine(55) in tRNA. Responsible for synthesis of pseudouridine from uracil-55 in the psi GC loop of transfer RNAs. The chain is tRNA pseudouridine synthase B from Nitratidesulfovibrio vulgaris (strain ATCC 29579 / DSM 644 / CCUG 34227 / NCIMB 8303 / VKM B-1760 / Hildenborough) (Desulfovibrio vulgaris).